The sequence spans 210 residues: Putative transmembrane protein DDB_G0267530 (210 aa).

A disordered region spans residues 1 to 40 (MGVEDQPQTQPQTQPQQQPQMGYQPQMGYQPQAQMGYQPQ). 2 consecutive transmembrane segments (helical) span residues 119–139 (VIVF…FFFI) and 148–168 (TFGI…VIVV).

The protein resides in the membrane. The polypeptide is Putative transmembrane protein DDB_G0267530 (Dictyostelium discoideum (Social amoeba)).